Reading from the N-terminus, the 134-residue chain is Small ribosomal subunit protein bS6 (134 aa).

The segment at 97-134 is disordered; the sequence is TDVSPIKASEGREDRRSAPQREERNHDNSDEVSEESED. Basic and acidic residues predominate over residues 105 to 125; the sequence is SEGREDRRSAPQREERNHDNS.

Belongs to the bacterial ribosomal protein bS6 family.

In terms of biological role, binds together with bS18 to 16S ribosomal RNA. This Marinomonas sp. (strain MWYL1) protein is Small ribosomal subunit protein bS6.